Reading from the N-terminus, the 194-residue chain is E3 ubiquitin-protein ligase RNF4 (194 aa).

The segment covering 1–12 has biased composition (basic residues); that stretch reads MSTRNPQRKRRG. A required for ubiquitination activity region spans residues 1–20; the sequence is MSTRNPQRKRRGGAVNSRQT. The tract at residues 1 to 36 is disordered; that stretch reads MSTRNPQRKRRGGAVNSRQTQKRTRETTSTPEISLE. The mediates interaction with TRPS1 stretch occupies residues 6-65; the sequence is PQRKRRGGAVNSRQTQKRTRETTSTPEISLEAEPIELVETVGDEIVDLTCESLEPVVVDL. 4 short sequence motifs (SUMO interaction motif) span residues 40-43, 50-53, 61-63, and 71-74; these read IELV, IVDL, VVV, and VVIV. A phosphoserine mark is found at Ser-98 and Ser-99. Residues Cys-136, Cys-139, Cys-158, His-160, Cys-163, Cys-166, Cys-177, and Cys-180 each coordinate Zn(2+). Residues 136–181 form an RING-type zinc finger; it reads CPICMDGYSEIVQNGRLIVSTECGHVFCSQCLRDSLKNANTCPTCR.

Homodimer (via RING-type zinc finger domain). Interacts with GSC2. Interacts with AR/the androgen receptor and TBP. Interacts with TCF20. Interacts with PATZ1. Interacts with TRPS1; negatively regulates TRPS1 transcriptional repressor activity. Interacts with PML (isoform PML-1, isoform PML-2, isoform PML-3, isoform PML-4, isoform PML-5 and isoform PML-6). Interacts with PRDM1/Blimp-1. Post-translationally, sumoylated; conjugated by one or two SUMO1 moieties. Autoubiquitinated. Widely expressed with highest levels in testis.

It is found in the cytoplasm. Its subcellular location is the nucleus. It localises to the nucleoplasm. The protein resides in the PML body. It catalyses the reaction S-ubiquitinyl-[E2 ubiquitin-conjugating enzyme]-L-cysteine + [acceptor protein]-L-lysine = [E2 ubiquitin-conjugating enzyme]-L-cysteine + N(6)-ubiquitinyl-[acceptor protein]-L-lysine.. Its pathway is protein modification; protein ubiquitination. E3 ubiquitin-protein ligase which binds polysumoylated chains covalently attached to proteins and mediates 'Lys-6'-, 'Lys-11'-, 'Lys-48'- and 'Lys-63'-linked polyubiquitination of those substrates and their subsequent targeting to the proteasome for degradation. Regulates the degradation of several proteins including PML and the transcriptional activator PEA3. Involved in chromosome alignment and spindle assembly, it regulates the kinetochore CENPH-CENPI-CENPK complex by targeting polysumoylated CENPI to proteasomal degradation. Regulates the cellular responses to hypoxia and heat shock through degradation of respectively EPAS1 and PARP1. Alternatively, it may also bind DNA/nucleosomes and have a more direct role in the regulation of transcription for instance enhancing basal transcription and steroid receptor-mediated transcriptional activation. Catalyzes ubiquitination of sumoylated PARP1 in response to PARP1 trapping to chromatin, leading to PARP1 removal from chromatin by VCP/p97. This chain is E3 ubiquitin-protein ligase RNF4, found in Rattus norvegicus (Rat).